The chain runs to 103 residues: Co-chaperonin GroES (103 aa).

Belongs to the GroES chaperonin family. Heptamer of 7 subunits arranged in a ring. Interacts with the chaperonin GroEL.

It is found in the cytoplasm. In terms of biological role, together with the chaperonin GroEL, plays an essential role in assisting protein folding. The GroEL-GroES system forms a nano-cage that allows encapsulation of the non-native substrate proteins and provides a physical environment optimized to promote and accelerate protein folding. GroES binds to the apical surface of the GroEL ring, thereby capping the opening of the GroEL channel. This Dinoroseobacter shibae (strain DSM 16493 / NCIMB 14021 / DFL 12) protein is Co-chaperonin GroES.